The primary structure comprises 137 residues: Ribosomal RNA large subunit methyltransferase H (137 aa).

S-adenosyl-L-methionine-binding positions include L56, G85, and 104-109 (LSPLTF).

It belongs to the RNA methyltransferase RlmH family. As to quaternary structure, homodimer.

The protein localises to the cytoplasm. The catalysed reaction is pseudouridine(1915) in 23S rRNA + S-adenosyl-L-methionine = N(3)-methylpseudouridine(1915) in 23S rRNA + S-adenosyl-L-homocysteine + H(+). Its function is as follows. Specifically methylates the pseudouridine at position 1915 (m3Psi1915) in 23S rRNA. The protein is Ribosomal RNA large subunit methyltransferase H of Prochlorococcus marinus (strain MIT 9515).